A 103-amino-acid polypeptide reads, in one-letter code: Large ribosomal subunit protein bL21 (103 aa).

This sequence belongs to the bacterial ribosomal protein bL21 family. As to quaternary structure, part of the 50S ribosomal subunit. Contacts protein L20.

Its function is as follows. This protein binds to 23S rRNA in the presence of protein L20. The polypeptide is Large ribosomal subunit protein bL21 (Dechloromonas aromatica (strain RCB)).